The sequence spans 463 residues: Succinate--CoA ligase [ADP-forming] subunit beta, mitochondrial (463 aa).

A mitochondrion-targeting transit peptide spans 1-53 (MAASVFYGRLLAVATLRNHRPRTALGAAAQVLGSSGLFNNHGLQVQQQQQRNL). The region spanning 61-288 (MELLQEAGVS…SNSAYRQKKI (228 aa)) is the ATP-grasp domain. K78 is modified (N6-acetyllysine). Residue Y84 is modified to Phosphotyrosine. The residue at position 88 (K88) is an N6-acetyllysine; alternate. K88 is subject to N6-succinyllysine; alternate. ATP contacts are provided by residues K98 and 105-107 (GRG). N6-acetyllysine occurs at positions 129, 139, 143, and 216. Mg(2+) contacts are provided by N258 and D272. S279 carries the phosphoserine modification. Residue N323 participates in substrate binding. T341 is subject to Phosphothreonine. K368 is modified (N6-acetyllysine). 380-382 (GIM) contributes to the substrate binding site.

The protein belongs to the succinate/malate CoA ligase beta subunit family. ATP-specific subunit beta subfamily. As to quaternary structure, heterodimer of an alpha and a beta subunit. The beta subunit determines specificity for ATP. Interacts with ALAS2. Requires Mg(2+) as cofactor.

The protein localises to the mitochondrion. It catalyses the reaction succinate + ATP + CoA = succinyl-CoA + ADP + phosphate. It participates in carbohydrate metabolism; tricarboxylic acid cycle; succinate from succinyl-CoA (ligase route): step 1/1. In terms of biological role, ATP-specific succinyl-CoA synthetase functions in the citric acid cycle (TCA), coupling the hydrolysis of succinyl-CoA to the synthesis of ATP and thus represents the only step of substrate-level phosphorylation in the TCA. The beta subunit provides nucleotide specificity of the enzyme and binds the substrate succinate, while the binding sites for coenzyme A and phosphate are found in the alpha subunit. This Macaca fascicularis (Crab-eating macaque) protein is Succinate--CoA ligase [ADP-forming] subunit beta, mitochondrial.